The following is an 858-amino-acid chain: MMNQLLIAILLASACLVYCTQYVTVFYGVPTWKNATIPLFCATRNRDTWGTIQCLPDNDDYQEITLNVTEAFDAWNNTVTEQAIEDVWHLFETSIKPCVKLTPLCVAMKCSSTESSTGNNTTSKSTSTTTTTPTDQEQEISEDTPCARADNCSGLGEEETINCQFNMTGLERDKKKQYNETWYSKDVVCETNNSTNQTQCYMNHCNTSVITESCDKHYWDAIRFRYCAPPGYALLRCNDTNYSGFAPNCSKVVASTCTRMMETQTSTWFGFNGTRAENRTYIYWHGRDNRTIISLNKYYNLSLHCKRPGNKTVKQIMLMSGHVFHSHYQPINKRPRQAWCWFKGKWKDAMQEVKETLAKHPRYRGTNDTRNISFAAPGKGSDPEVAYMWTNCRGEFLYCNMTWFLNWIENKTHRNYAPCHIKQIINTWHKVGRNVYLPPREGELSCNSTVTSIIANIDWQNNNQTNITFSAEVAELYRLELGDYKLVEITPIGFAPTKEKRYSSAHGRHTRGVFVLGFLGFLATAGSAMGAASLTVSAQSRTLLAGIVQQQQQLLDVVKRQQELLRLTVWGTKNLQARVTAIEKYLQDQARLNSWGCAFRQVCHTTVPWVNDSLAPDWDNMTWQEWEKQVRYLEANISKSLEQAQIQQEKNMYELQKLNSWDIFGNWFDLTSWVKYIQYGVLIIVAVIALRIVIYVVQMLSRLRKGYRPVFSSPPGYIQQIHIHKDRGQPANEETEEDGGSNGGDRYWPWPIAYIHFLIRQLIRLLTRLYSICRDLLSRSFLTLQLIYQNLRDWLRLRTAFLQYGCEWIQEAFQAAARATRETLAGACRGLWRVLERIGRGILAVPRRIRQGAEIALL.

The signal sequence occupies residues Met1–Cys19. Residues Thr20 to Tyr679 lie on the Extracellular side of the membrane. An N-linked (GlcNAc...) asparagine; by host glycan is attached at Asn34. An intrachain disulfide couples Cys41 to Cys54. Residues Asn67, Asn76, Asn119, Asn120, Asn151, Asn166, Asn179, Asn192, Asn193, Asn196, Asn206, Asn238, Asn241, Asn248, Asn272, Asn278, Asn289, Asn300, Asn310, Asn367, Asn371, Asn400, Asn410, Asn447, Asn463, and Asn466 are each glycosylated (N-linked (GlcNAc...) asparagine; by host). 5 cysteine pairs are disulfide-bonded: Cys98-Cys214, Cys105-Cys205, Cys110-Cys163, Cys227-Cys257, and Cys237-Cys249. A V1 region spans residues Cys110–Asn162. Residues Ser111–Thr134 show a composition bias toward low complexity. The tract at residues Ser111–Glu142 is disordered. Residues Cys163–Cys205 form a V2 region. Residues Cys305–Trp339 form a V3 region. An intrachain disulfide couples Cys305 to Cys340. 2 disulfide bridges follow: Cys392–Cys446 and Cys399–Cys419. The segment at Cys399 to Cys419 is V4. Residues Asn462–Phe469 form a V5 region. Residues Gly512 to Ala532 form a fusion peptide region. Positions Leu575–Arg591 are immunosuppression. Asn611, Asn620, and Asn636 each carry an N-linked (GlcNAc...) asparagine; by host glycan. Residues Gln624–Gln645 adopt a coiled-coil conformation. The tract at residues Lys657–Gln678 is MPER; binding to GalCer. A helical membrane pass occupies residues Gly680–Leu700. The Cytoplasmic segment spans residues Ser701–Leu858. Positions Tyr707–Val710 match the YXXV motif; contains endocytosis signal motif. Cys773 is lipidated: S-palmitoyl cysteine; by host. The short motif at Leu857 to Leu858 is the Di-leucine internalization motif element.

As to quaternary structure, the mature envelope protein (Env) consists of a homotrimer of non-covalently associated gp120-gp41 heterodimers. The resulting complex protrudes from the virus surface as a spike. There seems to be as few as 10 spikes on the average virion. Interacts with human CD4, CCR5 and CXCR4, to form a P4HB/PDI-CD4-CXCR4-gp120 complex. Gp120 also interacts with the C-type lectins CD209/DC-SIGN and CLEC4M/DC-SIGNR (collectively referred to as DC-SIGN(R)). Gp120 and gp41 interact with GalCer. The mature envelope protein (Env) consists of a homotrimer of non-covalently associated gp120-gp41 heterodimers. The resulting complex protrudes from the virus surface as a spike. There seems to be as few as 10 spikes on the average virion. Post-translationally, specific enzymatic cleavages in vivo yield mature proteins. Envelope glycoproteins are synthesized as an inactive precursor that is heavily N-glycosylated and processed likely by host cell furin in the Golgi to yield the mature SU and TM proteins. The cleavage site between SU and TM requires the minimal sequence [KR]-X-[KR]-R. Palmitoylation of the transmembrane protein and of Env polyprotein (prior to its proteolytic cleavage) is essential for their association with host cell membrane lipid rafts. Palmitoylation is therefore required for envelope trafficking to classical lipid rafts, but not for viral replication.

The protein resides in the virion membrane. It is found in the host cell membrane. Its subcellular location is the host endosome membrane. In terms of biological role, the surface protein gp120 (SU) attaches the virus to the host lymphoid cell by binding to the primary receptor CD4. This interaction induces a structural rearrangement creating a high affinity binding site for a chemokine coreceptor like CXCR4 and/or CCR5. This peculiar 2 stage receptor-interaction strategy allows gp120 to maintain the highly conserved coreceptor-binding site in a cryptic conformation, protected from neutralizing antibodies. Since CD4 also displays a binding site for the disulfide-isomerase P4HB/PDI, a P4HB/PDI-CD4-CXCR4-gp120 complex may form. In that complex, P4HB/PDI could reach and reduce gp120 disulfide bonds, causing major conformational changes in gp120. TXN, another PDI family member could also be involved in disulfide rearrangements in Env during fusion. These changes are transmitted to the transmembrane protein gp41 and are thought to activate its fusogenic potential by unmasking its fusion peptide. The surface protein gp120 is a ligand for CD209/DC-SIGN and CLEC4M/DC-SIGNR, which are respectively found on dendritic cells (DCs), and on endothelial cells of liver sinusoids and lymph node sinuses. These interactions allow capture of viral particles at mucosal surfaces by these cells and subsequent transmission to permissive cells. DCs are professional antigen presenting cells, critical for host immunity by inducing specific immune responses against a broad variety of pathogens. They act as sentinels in various tissues where they take up antigen, process it, and present it to T-cells following migration to lymphoid organs. HIV subverts the migration properties of dendritic cells to gain access to CD4+ T-cells in lymph nodes. Virus transmission to permissive T-cells occurs either in trans (without DCs infection, through viral capture and transmission), or in cis (following DCs productive infection, through the usual CD4-gp120 interaction), thereby inducing a robust infection. In trans infection, bound virions remain infectious over days and it is proposed that they are not degraded, but protected in non-lysosomal acidic organelles within the DCs close to the cell membrane thus contributing to the viral infectious potential during DCs' migration from the periphery to the lymphoid tissues. On arrival at lymphoid tissues, intact virions recycle back to DCs' cell surface allowing virus transmission to CD4+ T-cells. Virion capture also seems to lead to MHC-II-restricted viral antigen presentation, and probably to the activation of HIV-specific CD4+ cells. Its function is as follows. The transmembrane protein gp41 (TM) acts as a class I viral fusion protein. Under the current model, the protein has at least 3 conformational states: pre-fusion native state, pre-hairpin intermediate state, and post-fusion hairpin state. During fusion of viral and target intracellular membranes, the coiled coil regions (heptad repeats) assume a trimer-of-hairpins structure, positioning the fusion peptide in close proximity to the C-terminal region of the ectodomain. The formation of this structure appears to drive apposition and subsequent fusion of viral and target cell membranes. Complete fusion occurs in host cell endosomes and is dynamin-dependent, however some lipid transfer might occur at the plasma membrane. The virus undergoes clathrin-dependent internalization long before endosomal fusion, thus minimizing the surface exposure of conserved viral epitopes during fusion and reducing the efficacy of inhibitors targeting these epitopes. Membranes fusion leads to delivery of the nucleocapsid into the cytoplasm. Functionally, the envelope glycoprotein gp160 precursor down-modulates cell surface CD4 antigen by interacting with it in the endoplasmic reticulum and blocking its transport to the cell surface. In terms of biological role, the gp120-gp41 heterodimer seems to contribute to T-cell depletion during HIV-1 infection. The envelope glycoproteins expressed on the surface of infected cells induce apoptosis through an interaction with uninfected cells expressing the receptor (CD4) and the coreceptors CXCR4 or CCR5. This type of bystander killing may be obtained by at least three distinct mechanisms. First, the interaction between the 2 cells can induce cellular fusion followed by nuclear fusion within the syncytium. Syncytia are condemned to die from apoptosis. Second, the 2 interacting cells may not fuse entirely and simply exchange plasma membrane lipids, after a sort of hemifusion process, followed by rapid death. Third, it is possible that virus-infected cells, on the point of undergoing apoptosis, fuse with CD4-expressing cells, in which case apoptosis is rapidly transmitted from one cell to the other and thus occurs in a sort of contagious fashion. The gp120-gp41 heterodimer allows rapid transcytosis of the virus through CD4 negative cells such as simple epithelial monolayers of the intestinal, rectal and endocervical epithelial barriers. Both gp120 and gp41 specifically recognize glycosphingolipids galactosyl-ceramide (GalCer) or 3' sulfo-galactosyl-ceramide (GalS) present in the lipid rafts structures of epithelial cells. Binding to these alternative receptors allows the rapid transcytosis of the virus through the epithelial cells. This transcytotic vesicle-mediated transport of virions from the apical side to the basolateral side of the epithelial cells does not involve infection of the cells themselves. This is Envelope glycoprotein gp160 (env) from Homo sapiens (Human).